The chain runs to 274 residues: NADPH-dependent 7-cyano-7-deazaguanine reductase (274 aa).

80–82 (VES) lines the substrate pocket. 82–83 (SK) serves as a coordination point for NADPH. Cysteine 181 functions as the Thioimide intermediate in the catalytic mechanism. Aspartate 188 acts as the Proton donor in catalysis. Position 220-221 (220-221 (HE)) interacts with substrate. An NADPH-binding site is contributed by 249–250 (RG).

It belongs to the GTP cyclohydrolase I family. QueF type 2 subfamily. In terms of assembly, homodimer.

It localises to the cytoplasm. The enzyme catalyses 7-aminomethyl-7-carbaguanine + 2 NADP(+) = 7-cyano-7-deazaguanine + 2 NADPH + 3 H(+). It functions in the pathway tRNA modification; tRNA-queuosine biosynthesis. Functionally, catalyzes the NADPH-dependent reduction of 7-cyano-7-deazaguanine (preQ0) to 7-aminomethyl-7-deazaguanine (preQ1). The protein is NADPH-dependent 7-cyano-7-deazaguanine reductase of Burkholderia pseudomallei (strain 1710b).